The chain runs to 468 residues: Effector protein hopD2 (468 aa).

Polar residues predominate over residues 1–20 (MNPLQPIQHSITNSQMSGGQ). The tract at residues 1-35 (MNPLQPIQHSITNSQMSGGQQLEAEGSQAHNSYSH) is disordered. Residues 143-468 (DASSPPSAND…TQWRAKIALE (326 aa)) form the Tyrosine-protein phosphatase domain. C378 (phosphocysteine intermediate) is an active-site residue.

As to quaternary structure, interacts with EFR and FLS2 (via the kinase and cytoplasmic domains).

The protein localises to the secreted. It catalyses the reaction O-phospho-L-tyrosyl-[protein] + H2O = L-tyrosyl-[protein] + phosphate. Its activity is regulated as follows. Inhibited by sodium orthovanadate. Functionally, effector showing tyrosine-phosphatase activity required for host defense suppression. Functions inside plant cells causing suppression of HR (hypersensitive response), PR1 gene expression and oxidative burst probably by interfering with a MAPK (mitogen-activated protein kinase) pathway. MAPK cascades are known to activate defense-related transcription factors. Inhibits plant pattern-recognition receptors (PRRs) activation. The polypeptide is Effector protein hopD2 (hopD2) (Pseudomonas syringae pv. tomato (strain ATCC BAA-871 / DC3000)).